A 243-amino-acid polypeptide reads, in one-letter code: uncharacterized protein (243 aa).

A signal peptide spans 1–19 (MDELALSFSLTCLLPENRA). Asn-136 is a glycosylation site (N-linked (GlcNAc...) asparagine).

It is found in the secreted. This is an uncharacterized protein from Homo sapiens (Human).